A 449-amino-acid chain; its full sequence is Histone PARylation factor 1-like (449 aa).

The CCHC-type zinc-finger motif lies at 3-28 (KEDCKYWDKCYQQNPAHLSKYNHPKK). Residues 18–93 (AHLSKYNHPK…AKGSYEAETE (76 aa)) form a disordered region. Basic and acidic residues-rich tracts occupy residues 28 to 41 (KQQEHEVDGAEGKK) and 54 to 69 (EQKKEEQTEPVNKDKS). A Phosphoserine modification is found at S72. E384 acts as the Proton donor in catalysis.

It belongs to the HPF1 family.

The protein localises to the chromosome. Its subcellular location is the nucleus. Cofactor for serine ADP-ribosylation that confers serine specificity on Parp. Switches the amino acid specificity of Parp from aspartate or glutamate to serine residues. Acts by completing the active site of Parp: forms a composite active site composed of residues from HPF1/CG1218 and Parp. The sequence is that of Histone PARylation factor 1-like from Drosophila melanogaster (Fruit fly).